The primary structure comprises 521 residues: Lipid-translocating exporter-like protein RTA1 (521 aa).

7 helical membrane-spanning segments follow: residues 186-206 (GAPIFFTIAFAISTILHSWQC), 211-231 (AWKLIWLQPACAALFTLGYAL), 249-269 (LALFILSQICIYLGPPLLELA), 292-312 (VTAFFGGLMAIVEGLSGSGVS), 332-352 (LVALALQVCVIFIFVYLSVLF), 371-391 (TLMTLYLSMALIFIRCVFRLV), and 418-438 (EAYFYAFEASLMLINSFLWNV). The segment at 493-521 (THSQPQELYENPNGNGHKKFRLGNGGRAT) is disordered.

This sequence belongs to the lipid-translocating exporter (LTE) (TC 9.A.26.1) family.

It localises to the membrane. Lipid-translocating exporter-like protein; part of the gene cluster that mediates the biosynthesis of phomenoic acid, a long chain aliphatic carboxylic acid that does not appear to be essential for pathogenicity but may play a role in allowing to outcompete other fungi in the environmental niche via its antifungal properties. In Leptosphaeria maculans (strain JN3 / isolate v23.1.3 / race Av1-4-5-6-7-8) (Blackleg fungus), this protein is Lipid-translocating exporter-like protein RTA1.